The sequence spans 303 residues: Mitochondrial substrate carrier family protein E (303 aa).

Topologically, residues methionine 1–serine 8 are mitochondrial intermembrane. Solcar repeat units lie at residues glutamate 6 to tryptophan 93, glutamate 104 to threonine 197, and leucine 210 to leucine 298. Residues leucine 9–valine 29 traverse the membrane as a helical segment. Over aspartate 30–lysine 67 the chain is Mitochondrial matrix. A helical membrane pass occupies residues glycine 68–glutamate 88. The Mitochondrial intermembrane segment spans residues tyrosine 89 to histidine 109. Residues phenylalanine 110 to isoleucine 130 traverse the membrane as a helical segment. Residues lysine 131–arginine 171 lie on the Mitochondrial matrix side of the membrane. The helical transmembrane segment at glycine 172 to glutamate 192 threads the bilayer. Over lysine 193 to glutamine 215 the chain is Mitochondrial intermembrane. A helical transmembrane segment spans residues leucine 216–isoleucine 236. Over lysine 237–lysine 268 the chain is Mitochondrial matrix. A helical transmembrane segment spans residues alanine 269–isoleucine 289. At alanine 290–isoleucine 303 the chain is on the mitochondrial intermembrane side.

Belongs to the mitochondrial carrier (TC 2.A.29) family.

It is found in the mitochondrion inner membrane. Its function is as follows. Mitochondrial solute carriers shuttle metabolites, nucleotides, and cofactors through the mitochondrial inner membrane. The polypeptide is Mitochondrial substrate carrier family protein E (mcfE) (Dictyostelium discoideum (Social amoeba)).